The following is a 397-amino-acid chain: MEQTWRWYGPNDPVSLDDIRQAGATGVVTALHHIPNGVVWPVSEIKQRQAELAAKNLVWSVVESVPIHEDIKTHSGNYQQYIENYQQTLRNIAECGIDTVCYNFMPILDWTRTDLEYELPDGSKALRFDQIAFAAFELHILKRPGASNDYTAEEQVQAEAYFNAMTEADIAKLTGNIIAGLPGAEEGYTLDQFRARLAEYDGIDKAQLRENMAYFLRAIIPVAEQVGLRMAVHPDDPPRPILGLPRIVSTIEDMQWLKETVDSIHNGFTMCTGSYGVRADNDLVKMIETFGDRIHFTHLRSTCREGNPKTFHEGGHLQGDVDMYSVVKAILTEEQRRQSLGDMRPIPMRPDHGHQMLDDLHKKTNPGYSAIGRLKGLAEVRGVELALKRTFFPELKQ.

Belongs to the mannonate dehydratase family. The cofactor is Fe(2+). It depends on Mn(2+) as a cofactor.

The catalysed reaction is D-mannonate = 2-dehydro-3-deoxy-D-gluconate + H2O. Its pathway is carbohydrate metabolism; pentose and glucuronate interconversion. Catalyzes the dehydration of D-mannonate. This is Mannonate dehydratase from Yersinia pestis bv. Antiqua (strain Angola).